A 152-amino-acid chain; its full sequence is Protein FERTILITY RESTORER RF2, mitochondrial (152 aa).

The N-terminal 52 residues, 1 to 52, are a transit peptide targeting the mitochondrion; that stretch reads MSTLVTCSLPGAVTTHASTRRFGGSQFQTSQASCISFKREVSAKAVLRSVRC. The span at 52-69 shows a compositional bias: polar residues; it reads CNATQTQSAQRKSSTATV. The segment at 52 to 99 is disordered; sequence CNATQTQSAQRKSSTATVKRSDPKGKIQGPKLDDGSGGFPPFRFGKGG.

It is found in the mitochondrion. Restores fertility in rice varieties with LD-type cytoplasmic male sterility (CMS). CMS is caused by genetic incompatibility between nuclei and mitochondria within male reproductive organs. Corresponds to the functional allele of RF2, which is dependent of the presence of Ile-78 in the japonica cultivars Fukuyama and Owarihatamochi (AC F1SZ42), and indica cultivar Kasalath (AC F1SZ41). Non-functional RF2 alleles are found in japonica cultivars Taichung 65 and Nipponbare (AC F1SZ44), where Ile-78 is replaced by Thr-78. This is Protein FERTILITY RESTORER RF2, mitochondrial from Oryza sativa subsp. japonica (Rice).